We begin with the raw amino-acid sequence, 457 residues long: Argininosuccinate lyase (457 aa).

This sequence belongs to the lyase 1 family. Argininosuccinate lyase subfamily.

The protein localises to the cytoplasm. It catalyses the reaction 2-(N(omega)-L-arginino)succinate = fumarate + L-arginine. It functions in the pathway amino-acid biosynthesis; L-arginine biosynthesis; L-arginine from L-ornithine and carbamoyl phosphate: step 3/3. The polypeptide is Argininosuccinate lyase (Escherichia coli O139:H28 (strain E24377A / ETEC)).